The chain runs to 244 residues: MSLLPHRQTQLKALLRRLGLTDNTPVDWNLVDLALTHASQSPEQNYQQLEFVGDAVVRLASAEVLMKHYPQTSVGEMSALRAILVSDRTLAGWGELYGLDRFLWITPAVLADKNGRVSLMADSFEALLGALYLSVGDLSLIRPWLSEHLLAKATEIRQDPALHNYKEALQAWTQAHYKCLPEYRVEPLDQNLPQQSGFQATVWLGDQPLGSGSGSSKKSAEQAAAQQAYQDFIAKEILPMPKIN.

The RNase III domain occupies 11 to 136 (LKALLRRLGL…LLGALYLSVG (126 aa)). Mg(2+) is bound at residue Glu-50. Asp-54 is a catalytic residue. 2 residues coordinate Mg(2+): Asp-122 and Glu-125. Glu-125 is an active-site residue. A DRBM domain is found at 164 to 234 (NYKEALQAWT…AQQAYQDFIA (71 aa)).

This sequence belongs to the ribonuclease III family. In terms of assembly, homodimer. It depends on Mg(2+) as a cofactor.

It localises to the cytoplasm. The catalysed reaction is Endonucleolytic cleavage to 5'-phosphomonoester.. In terms of biological role, digests double-stranded RNA. Involved in the processing of primary rRNA transcript to yield the immediate precursors to the large and small rRNAs (23S and 16S). Processes some mRNAs, and tRNAs when they are encoded in the rRNA operon. Processes pre-crRNA and tracrRNA of type II CRISPR loci if present in the organism. This is Ribonuclease 3 2 from Synechocystis sp. (strain ATCC 27184 / PCC 6803 / Kazusa).